A 198-amino-acid polypeptide reads, in one-letter code: Synaptobrevin homolog YKT6-B (198 aa).

The 120-residue stretch at 8-127 (VLYKGENKVH…IQYNALDSYL (120 aa)) folds into the Longin domain. One can recognise a v-SNARE coiled-coil homology domain in the interval 138–198 (PMSKVQAELD…RKQNSCCDIM (61 aa)). C194 carries the S-palmitoyl cysteine lipid modification. C195 is modified (cysteine methyl ester). C195 carries S-farnesyl cysteine lipidation. Positions 196-198 (DIM) are cleaved as a propeptide — removed in mature form.

The protein belongs to the synaptobrevin family. Post-translationally, palmitoylated; catalyzes its own palmitoylation. Palmitoylation is required for Golgi targeting. In terms of processing, farnesylation is required for Golgi targeting.

It is found in the cytoplasm. It localises to the cytosol. The protein resides in the cytoplasmic vesicle membrane. Its subcellular location is the golgi apparatus membrane. Vesicular soluble NSF attachment protein receptor (v-SNARE) mediating vesicle docking and fusion to a specific acceptor cellular compartment. Functions in endoplasmic reticulum to Golgi transport; as part of a SNARE complex composed of GOSR1, GOSR2 and STX5. Functions in early/recycling endosome to TGN transport; as part of a SNARE complex composed of BET1L, GOSR1 and STX5. Has a S-palmitoyl transferase activity. In Xenopus laevis (African clawed frog), this protein is Synaptobrevin homolog YKT6-B (ykt6-b).